The following is a 430-amino-acid chain: Neuropeptide FF receptor 1 (430 aa).

The disordered stretch occupies residues 1-20; sequence MEGEPSQPPNSSWPLSQNGT. Residues 1-43 lie on the Extracellular side of the membrane; that stretch reads MEGEPSQPPNSSWPLSQNGTNTEATPATNLTFSSYYQHTSPVA. Residues 9 to 20 show a composition bias toward polar residues; the sequence is PNSSWPLSQNGT. N-linked (GlcNAc...) asparagine glycosylation is found at Asn-10, Asn-18, and Asn-29. The chain crosses the membrane as a helical span at residues 44-64; it reads AMFIVAYALIFLLCMVGNTLV. Over 65–80 the chain is Cytoplasmic; sequence CFIVLKNRHMHTVTNM. The chain crosses the membrane as a helical span at residues 81–101; that stretch reads FILNLAVSDLLVGIFCMPTTL. At 102-117 the chain is on the extracellular side; sequence VDNLITGWPFDNATCK. The N-linked (GlcNAc...) asparagine glycan is linked to Asn-113. Cys-116 and Cys-203 are disulfide-bonded. Residues 118-138 form a helical membrane-spanning segment; that stretch reads MSGLVQGMSVSASVFTLVAIA. Over 139–158 the chain is Cytoplasmic; sequence VERFRCIVHPFREKLTLRKA. Residues 159-179 traverse the membrane as a helical segment; that stretch reads LVTIAVIWALALLIMCPSAVT. At 180 to 214 the chain is on the extracellular side; that stretch reads LTVTREEHHFMVDARNRSYPLYSCWEAWPEKGMRR. A glycan (N-linked (GlcNAc...) asparagine) is linked at Asn-195. The chain crosses the membrane as a helical span at residues 215-235; it reads VYTTVLFSHIYLAPLALIVVM. Topologically, residues 236 to 271 are cytoplasmic; that stretch reads YARIARKLCQAPGPAPGGEEAADPRASRRRARVVHM. A helical transmembrane segment spans residues 272–292; that stretch reads LVMVALFFTLSWLPLWALLLL. The Extracellular segment spans residues 293–307; that stretch reads IDYGQLSAPQLHLVT. A helical transmembrane segment spans residues 308-328; that stretch reads VYAFPFAHWLAFFNSSANPII. Residues 329 to 430 are Cytoplasmic-facing; the sequence is YGYFNENFRR…LPLTIPAWDI (102 aa). Over residues 379–404 the composition is skewed to low complexity; sequence SDSGLPSESGPSSGAPRPGRLPLRNG. A disordered region spans residues 379–413; the sequence is SDSGLPSESGPSSGAPRPGRLPLRNGRVAHHGLPR.

It belongs to the G-protein coupled receptor 1 family.

The protein localises to the cell membrane. Functionally, receptor for NPAF (A-18-F-amide) and NPFF (F-8-F-amide) neuropeptides, also known as morphine-modulating peptides. Can also be activated by a variety of naturally occurring or synthetic FMRF-amide like ligands. This receptor mediates its action by association with G proteins that activate a phosphatidylinositol-calcium second messenger system. This chain is Neuropeptide FF receptor 1, found in Homo sapiens (Human).